Here is a 762-residue protein sequence, read N- to C-terminus: MAIQTSNLGYPRIGLQREWKKTLEAFWSNKIDEEQFLTTMKEIRLQHVKAQQEKGIELIPIGDFTYYDHVLDTAYMLGFIPSRFSEFTSYLDVYFAMARGSKDHVASEMTKWFNTNYHYIVPEYEEGLQISLKDNRPLRLYEEAKQELGIDGKPVILGPYTFLKLAKGYTQEQFATILKQLVAPYVQLLSELHAAGAQIIQVDEPIFASLTKEEVQQAKEIYEAIRKEVPNANLLLQTYFDSVEENYEEIITFPVSSIGLDFVHGKEGNLHAISKYGFPADKTLAVGCIDGRNIWRADLDEVLTLFTTLQKQVQTKDFIVQPSCSLLHTPIDKTEETHLSTELFDALAFANQKLEELVLIHSALTQGTESIHNELETYRNVHHTIRSSAARNREDVKAARTALKEEDFSRPLPFEKRYELQQVALKLPLLPTTTIGSFPQTTEVRQTRKEWRNGVISNEQYEQFIEKETEKWIRYQEEIGLDVLVHGEFERTDMVEYFGERLAGFSFTKNGWVQSYGSRCVKPPVIYGDVAFINGMTIKETVYAQSLTEKVVKGMLTGPVTILNWSFVRNDIPRKEVSYQIALALRHEIELLESSGIRVIQVDEPALREGMPLKEKDWDAYITWAVQSFLLATSSVANETQIHTHMCYSNFEDIVDAIRALDADVISIETSRSHGEFIDTLKHTTYEKGIGLGVYDIHSPRVPSKDEMYKIVEQSLKVCDPKYFWINPDCGLKTRRTEEVIPALEHMVQAAKDARSLLKTNA.

5-methyltetrahydropteroyltri-L-glutamate contacts are provided by residues 17 to 20 (REWK) and Lys111. Residues 435 to 437 (IGS) and Glu488 contribute to the L-homocysteine site. Residues 435–437 (IGS) and Glu488 contribute to the L-methionine site. 5-methyltetrahydropteroyltri-L-glutamate-binding positions include 519–520 (RC) and Trp565. Asp603 contributes to the L-homocysteine binding site. Residue Asp603 participates in L-methionine binding. Residue Glu609 coordinates 5-methyltetrahydropteroyltri-L-glutamate. Zn(2+) contacts are provided by His645, Cys647, and Glu669. The Proton donor role is filled by His698. Position 730 (Cys730) interacts with Zn(2+).

This sequence belongs to the vitamin-B12 independent methionine synthase family. Zn(2+) serves as cofactor.

The catalysed reaction is 5-methyltetrahydropteroyltri-L-glutamate + L-homocysteine = tetrahydropteroyltri-L-glutamate + L-methionine. The protein operates within amino-acid biosynthesis; L-methionine biosynthesis via de novo pathway; L-methionine from L-homocysteine (MetE route): step 1/1. Catalyzes the transfer of a methyl group from 5-methyltetrahydrofolate to homocysteine resulting in methionine formation. The polypeptide is 5-methyltetrahydropteroyltriglutamate--homocysteine methyltransferase (Bacillus cereus (strain ATCC 10987 / NRS 248)).